The following is a 171-amino-acid chain: MEDLRNVIRDIPDFPKKGIVFKDITTLLADAKSFHRMVDLIAHRYIGQKIDQIVGVEARGFILGAALAYKLGTGITLVRKPGKLPYKTIQKTYQLEYGTDTLEIHSDAFKPGDRVVVADDLLATGGTVAAVAELVKECGAEIVECAFLAELEFLKGRERLPLDRVFSLLKF.

Belongs to the purine/pyrimidine phosphoribosyltransferase family. Homodimer.

It is found in the cytoplasm. The catalysed reaction is AMP + diphosphate = 5-phospho-alpha-D-ribose 1-diphosphate + adenine. Its pathway is purine metabolism; AMP biosynthesis via salvage pathway; AMP from adenine: step 1/1. Catalyzes a salvage reaction resulting in the formation of AMP, that is energically less costly than de novo synthesis. This chain is Adenine phosphoribosyltransferase, found in Syntrophotalea carbinolica (strain DSM 2380 / NBRC 103641 / GraBd1) (Pelobacter carbinolicus).